Consider the following 78-residue polypeptide: uncharacterized protein (78 aa).

This is an uncharacterized protein from Escherichia coli (strain K12).